The primary structure comprises 200 residues: Riboflavin synthase (200 aa).

Lumazine-binding repeat units follow at residues 1 to 97 and 98 to 190; these read MFSG…IGGH and LLSG…VDTV. Residues 4 to 6, 48 to 50, 62 to 67, 101 to 103, Lys132, 141 to 143, and 155 to 160 contribute to the 2,4-dihydroxypteridine site; these read GII, CLT, DVIPET, GHV, SLT, and GLIPET.

As to quaternary structure, homotrimer.

It carries out the reaction 2 6,7-dimethyl-8-(1-D-ribityl)lumazine + H(+) = 5-amino-6-(D-ribitylamino)uracil + riboflavin. It participates in cofactor biosynthesis; riboflavin biosynthesis; riboflavin from 2-hydroxy-3-oxobutyl phosphate and 5-amino-6-(D-ribitylamino)uracil: step 2/2. Functionally, catalyzes the dismutation of two molecules of 6,7-dimethyl-8-ribityllumazine, resulting in the formation of riboflavin and 5-amino-6-(D-ribitylamino)uracil. This Chlamydia pneumoniae (Chlamydophila pneumoniae) protein is Riboflavin synthase (ribE).